Consider the following 445-residue polypeptide: MLNRRNFIRTTSALAASTALPGYAFGQSGPLRLEITEGVIEPLPFALPTFLAVGGAEDAAADVSRVIAADLRGTGLFRQIPPDAYISQITNFGAPVAYPDWQAINAQALITGQVEARADGQLVVRFRLFDVFSQAPLGEGLQFVGPADSWRRMAHTVADQVYSRITGEGGYFDTRVAFIAEEGPKNARLKRLAIMDYDGANVQFLTDSRSIVLAPRFSPQGDRILYTSYESGFPQVYIMDVATVQRRPLEAIPAETMTFSPRFSPSGQSVVFSLVDGSNTDIYSLDLATGTRRQLTQAPSIETAPSFSPDGSQIVFESDRSGNQQIYIMPADGGEARRVSAGTGRYGTPVWSPRGDYIAFTKQENGRFHIGVMRTDGSDERLLTSSFLDEGPTWAPNGRVIMFTRETPGDDGAPAVYSVDISGRNLQRVATPGMASDPAWSPLQS.

The first 26 residues, 1 to 26 (MLNRRNFIRTTSALAASTALPGYAFG), serve as a signal peptide directing secretion.

Belongs to the TolB family. As to quaternary structure, the Tol-Pal system is composed of five core proteins: the inner membrane proteins TolA, TolQ and TolR, the periplasmic protein TolB and the outer membrane protein Pal. They form a network linking the inner and outer membranes and the peptidoglycan layer.

Its subcellular location is the periplasm. Part of the Tol-Pal system, which plays a role in outer membrane invagination during cell division and is important for maintaining outer membrane integrity. The polypeptide is Tol-Pal system protein TolB (Jannaschia sp. (strain CCS1)).